We begin with the raw amino-acid sequence, 364 residues long: 2-oxoglutarate-dependent dioxygenase imqE (364 aa).

The segment at 73-92 (KQKAAHPPGPNPQRGWSGIG) is disordered. A Fe2OG dioxygenase domain is found at 199–315 (DGSELRLLHY…RWSAAYFFKA (117 aa)). Fe cation contacts are provided by histidine 227, aspartate 229, and histidine 287. A 2-oxoglutarate-binding site is contributed by arginine 306.

Belongs to the iron/ascorbate-dependent oxidoreductase family. Requires Fe(2+) as cofactor.

The protein operates within secondary metabolite biosynthesis. In terms of biological role, 2-oxoglutarate-dependent dioxygenase; part of the gene cluster that mediates the biosynthesis of imizoquins A to D, tripeptide-derived alkaloids that serve a protective role against oxidative stress that are essential for normal germination. ImqB is a canonical three-module NRPS that assembles the tripeptide backbone of the imizoquins via condensation of Trp, Tyr, and Leu-derived precursors. N-methylation by imqF and phenol oxidation by imqC, followed by cyclization via the FAD-dependent oxidase imqH carry out the three-step transformation of L-tyrosine into tetrahydroisoquinoline. Importantly, this sequence requires the presence of a free amine in the tyrosine moiety, indicating that isoquinoline formation occurs prior to peptide bond formation. The imidazolidin-4-one ring of imizoquins could form following additional oxidation of the methyl-derived bridgehead carbon by imqH. Lastly, O-methylation by imqG and leucine hydroxylation by imqE complete biosynthesis of the imizoquins. This Aspergillus flavus (strain ATCC 200026 / FGSC A1120 / IAM 13836 / NRRL 3357 / JCM 12722 / SRRC 167) protein is 2-oxoglutarate-dependent dioxygenase imqE.